The primary structure comprises 366 residues: sn-glycerol-3-phosphate import ATP-binding protein UgpC (366 aa).

The region spanning Leu-4–Ile-235 is the ABC transporter domain. Gly-37–Ser-44 lines the ATP pocket.

Belongs to the ABC transporter superfamily. sn-glycerol-3-phosphate importer (TC 3.A.1.1.3) family. The complex is composed of two ATP-binding proteins (UgpC), two transmembrane proteins (UgpA and UgpE) and a solute-binding protein (UgpB).

Its subcellular location is the cell inner membrane. It carries out the reaction sn-glycerol 3-phosphate(out) + ATP + H2O = sn-glycerol 3-phosphate(in) + ADP + phosphate + H(+). Part of the ABC transporter complex UgpBAEC involved in sn-glycerol-3-phosphate (G3P) import. Responsible for energy coupling to the transport system. The polypeptide is sn-glycerol-3-phosphate import ATP-binding protein UgpC (Cupriavidus necator (strain ATCC 17699 / DSM 428 / KCTC 22496 / NCIMB 10442 / H16 / Stanier 337) (Ralstonia eutropha)).